A 691-amino-acid polypeptide reads, in one-letter code: Dipeptidyl-peptidase 5 (691 aa).

The N-terminal stretch at 1 to 20 is a signal peptide; that stretch reads MKRTILSLLAAVSLAIPVYA. Residues Ser549, Asp634, and His666 each act as charge relay system in the active site.

It belongs to the peptidase S9C family. As to quaternary structure, homodimer.

It localises to the periplasm. Catalyzes the removal of dipeptides from the N-terminus of oligopeptides. Prefers Ala and hydrophobic residues at the P1 position, and has no preference for P2 residues. Shows the highest dipeptidyl peptidase activity toward the synthetic substrate Lys-Ala-methylcoumaryl-7-amide (Lys-Ala-MCA). Is likely involved in amino acid metabolism and bacterial growth/survival of asaccharolytic P.endodontalis, that utilizes amino acids from extracellular proteinaceous nutrients as energy and carbon sources. This chain is Dipeptidyl-peptidase 5, found in Porphyromonas endodontalis (strain ATCC 35406 / DSM 24491 / JCM 8526 / CCUG 16442 / BCRC 14492 / NCTC 13058 / HG 370) (Bacteroides endodontalis).